The primary structure comprises 1357 residues: DNA-directed RNA polymerase subunit beta (1357 aa).

The protein belongs to the RNA polymerase beta chain family. The RNAP catalytic core consists of 2 alpha, 1 beta, 1 beta' and 1 omega subunit. When a sigma factor is associated with the core the holoenzyme is formed, which can initiate transcription.

It carries out the reaction RNA(n) + a ribonucleoside 5'-triphosphate = RNA(n+1) + diphosphate. DNA-dependent RNA polymerase catalyzes the transcription of DNA into RNA using the four ribonucleoside triphosphates as substrates. This Pseudomonas fluorescens (strain ATCC BAA-477 / NRRL B-23932 / Pf-5) protein is DNA-directed RNA polymerase subunit beta.